The following is a 238-amino-acid chain: Ribonuclease PH (238 aa).

Phosphate contacts are provided by residues arginine 86 and 124 to 126; that span reads GTR.

The protein belongs to the RNase PH family. Homohexameric ring arranged as a trimer of dimers.

The catalysed reaction is tRNA(n+1) + phosphate = tRNA(n) + a ribonucleoside 5'-diphosphate. Its function is as follows. Phosphorolytic 3'-5' exoribonuclease that plays an important role in tRNA 3'-end maturation. Removes nucleotide residues following the 3'-CCA terminus of tRNAs; can also add nucleotides to the ends of RNA molecules by using nucleoside diphosphates as substrates, but this may not be physiologically important. Probably plays a role in initiation of 16S rRNA degradation (leading to ribosome degradation) during starvation. This chain is Ribonuclease PH, found in Mannheimia haemolytica (Pasteurella haemolytica).